We begin with the raw amino-acid sequence, 123 residues long: Omega-oxotoxin-Ot1a (123 aa).

Positions 1–16 (MKIVLVFVCTLYLAQA) are cleaved as a signal peptide. Positions 17–54 (TYLSEQDVNEVSEFLEALDQANEAASEMVEAAETEEAR) are excised as a propeptide. The 68-residue stretch at 55-122 (DWECLPLHSS…GKINTCDKYK (68 aa)) folds into the Oxytoxin-type inhibitor cystine knot (ICK) domain. 5 disulfide bridges follow: C58–C72, C65–C77, C69–C118, C71–C106, and C79–C104.

It belongs to the spiderine family. Spiderine subfamily. Post-translationally, mass spectrometry data suggest a carboxylated free C-terminal residue. As to expression, expressed by the venom gland.

The protein resides in the secreted. In terms of biological role, weak blocker of vertebrate P/Q-, N- and L-type voltage-gated calcium channels (Cav1 and Cav2). Is both paralytic and lethal when injected into lepidopteran larvae. Is not toxic to mice. This chain is Omega-oxotoxin-Ot1a, found in Oxyopes takobius (Lynx spider).